Consider the following 202-residue polypeptide: MKIMEIFEFKGNGVKKLFIGGLHGNEGKFTEIILKDFVNSLKECNYIGDIVVIPKLVENSKYISTLSEKYYESDEGKTLINIIKKYKPKVYFELHAYKKENYKKLTSNNRKKVPPLIDIGNNVLIASISPILRKRFSKEDFCMTIEIPSWKVYEVKDEILKILKIGAESLRREEIIEKLKKIYPEHIEKAEYFSKKYNLMLF.

This is an uncharacterized protein from Methanocaldococcus jannaschii (strain ATCC 43067 / DSM 2661 / JAL-1 / JCM 10045 / NBRC 100440) (Methanococcus jannaschii).